A 676-amino-acid polypeptide reads, in one-letter code: Envelope glycoprotein (676 aa).

An N-terminal signal peptide occupies residues 1-32 (MGVTGILQLPRDRFKRTSFFLWVIILFQRTFS). Topologically, residues 33 to 650 (IPLGVIHNST…NDNWWTGWRQ (618 aa)) are extracellular. The N-linked (GlcNAc...) asparagine; by host glycan is linked to Asn40. Intrachain disulfides connect Cys53-Cys609, Cys108-Cys135, Cys121-Cys147, Cys511-Cys556, and Cys601-Cys608. A receptor-binding region spans residues 54–201 (RDKLSSTNQL…DFFSSHPLRE (148 aa)). N-linked (GlcNAc...) asparagine; by host glycans are attached at residues Asn204, Asn228, Asn238, Asn257, Asn268, Asn296, Asn317, Asn333, Asn346, Asn386, and Asn413. The segment at 305 to 485 (ELSFTAVSNR…SGKLGLITNT (181 aa)) is mucin-like region. Over residues 314 to 335 (RAKNISGQSPARTSSDPGTNTT) the composition is skewed to polar residues. Residues 314-337 (RAKNISGQSPARTSSDPGTNTTTE) are disordered. The segment at 370–478 (TISTSPQPPT…TGEESASSGK (109 aa)) is disordered. Residues 414-427 (DSTASDTPPATTAA) are compositionally biased toward low complexity. Asn436, Asn454, and Asn462 each carry an N-linked (GlcNAc...) asparagine; by host glycan. A compositionally biased stretch (polar residues) spans 447–464 (ATTTSPQNHSETAGNNNT). The tract at residues 524–539 (GAAIGLAWIPYFGPAA) is fusion peptide. The stretch at 554 to 595 (LICGLRQLANETTQALQLFLRATTELRTFSILNRKAIDFLLQ) forms a coiled coil. An N-linked (GlcNAc...) asparagine; by host glycan is attached at Asn563. A coiled-coil region spans residues 615–634 (WTKNITDKIDQIIHDFVDKT). Asn618 carries N-linked (GlcNAc...) asparagine; by host glycosylation. Residues 651 to 671 (WIPAGIGVTGVIIAVIALFCI) traverse the membrane as a helical segment. S-palmitoyl cysteine; by host attachment occurs at residues Cys670 and Cys672. Over 672–676 (CKFVF) the chain is Cytoplasmic.

This sequence belongs to the filoviruses glycoprotein family. As to quaternary structure, homotrimer; each monomer consists of a GP1 and a GP2 subunit linked by disulfide bonds. The resulting peplomers (GP1,2) protrude from the virus surface as spikes. Interacts with host integrin alpha-V/ITGAV. Interacts with host CLEC10A. Binds also to host CD209 and CLEC4M/DC-SIGN(R). Interacts with host FOLR1. Interacts with BST2; this interaction inhibits the antiviral effect of BST2 and this allows viral release from infected cells. Interacts with host FCN1; this interaction enhances viral entry. Interacts with host TLR4; this interaction induces cell death in T-lymphocytes or proinflammatory cytokines and SOCS1 production in monocytes. In terms of assembly, interacts with host entry receptor NPC1. GP1 and GP2delta are part of GP1,2delta soluble complexes released by ectodomain shedding. In terms of processing, the signal peptide region modulates GP's high mannose glycosylation, thereby determining the efficiency of the interactions with DC-SIGN(R). N-glycosylated. Post-translationally, O-glycosylated in the mucin-like region. In terms of processing, palmitoylation of GP2 is not required for its function. Specific enzymatic cleavages in vivo yield mature proteins. The precursor is processed into GP1 and GP2 by host cell furin in the trans Golgi, and maybe by other host proteases, to yield the mature GP1 and GP2 proteins. The cleavage site corresponds to the furin optimal cleavage sequence [KR]-X-[KR]-R. This cleavage does not seem to be required for function. After the internalization of the virus into cell endosomes, GP1 C-terminus is removed by the endosomal proteases cathepsin B, cathepsin L, or both, leaving a 19-kDa N-terminal fragment which is further digested by cathepsin B. Proteolytic processing of GP1,2 by host ADAM17 can remove the transmembrane anchor of GP2 and leads to shedding of complexes consisting in GP1 and truncated GP2 (GP1,2delta).

The protein localises to the virion membrane. It is found in the host cell membrane. Its subcellular location is the secreted. Trimeric GP1,2 complexes form the virion surface spikes and mediate the viral entry processes, with GP1 acting as the receptor-binding subunit and GP2 as the membrane fusion subunit. At later times of infection, down-regulates the expression of various host cell surface molecules that are essential for immune surveillance and cell adhesion. Down-modulates several integrins including ITGA1, ITGA2, ITGA3, ITGA4, ITGA5, ITGA6, ITGAV and ITGB1. This decrease in cell adhesion molecules may lead to cell detachment, contributing to the disruption of blood vessel integrity and hemorrhages developed during infection (cytotoxicity). Interacts with host TLR4 and thereby stimulates the differentiation and activation of monocytes leading to bystander death of T-lymphocytes. Down-regulates as well the function of host natural killer cells. Counteracts the antiviral effect of host BST2/tetherin that restricts release of progeny virions from infected cells. However, cooperates with VP40 and host BST2 to activate canonical NF-kappa-B pathway in a manner dependent on neddylation. Its function is as follows. Functions as a decoy for anti-GP1,2 antibodies thereby contributing to viral immune evasion. Interacts and activates host macrophages and dendritic cells inducing up-regulation of cytokine transcription. This effect is mediated throught activation of host TLR4. Functionally, responsible for binding to the receptor(s) on target cells. Interacts with CD209/DC-SIGN and CLEC4M/DC-SIGNR which act as cofactors for virus entry into dendritic cells (DCs) and endothelial cells. Binding to the macrophage specific lectin CLEC10A also seems to enhance virus infectivity. Interaction with FOLR1/folate receptor alpha may be a cofactor for virus entry in some cell types, although results are contradictory. Members of the Tyro3 receptor tyrosine kinase family also seem to be cell entry factors in filovirus infection. Once attached, the virions are internalized through clathrin-dependent endocytosis and/or macropinocytosis. After internalization of the virus into the endosomes of the host cell, proteolysis of GP1 by two cysteine proteases, CTSB/cathepsin B and CTSL/cathepsin L removes the glycan cap and allows GP1 binding to the host entry receptor NPC1. NPC1-binding, Ca(2+) and acidic pH induce a conformational change of GP2, which unmasks its fusion peptide and permit membranes fusion. In terms of biological role, acts as a class I viral fusion protein. Under the current model, the protein has at least 3 conformational states: pre-fusion native state, pre-hairpin intermediate state, and post-fusion hairpin state. During viral and target cell membrane fusion, the coiled coil regions (heptad repeats) assume a trimer-of-hairpins structure, positioning the fusion peptide in close proximity to the C-terminal region of the ectodomain. The formation of this structure appears to drive apposition and subsequent fusion of viral and target cell membranes. Responsible for penetration of the virus into the cell cytoplasm by mediating the fusion of the membrane of the endocytosed virus particle with the endosomal membrane. Low pH in endosomes induces an irreversible conformational change in GP2, releasing the fusion hydrophobic peptide. The polypeptide is Envelope glycoprotein (GP) (Zaire ebolavirus (strain Kikwit-95) (ZEBOV)).